Here is a 338-residue protein sequence, read N- to C-terminus: Lipoate-protein ligase A (338 aa).

One can recognise a BPL/LPL catalytic domain in the interval 29–216 (PATQRVLFLW…AFFAHYGERI (188 aa)). ATP is bound by residues Arg71, 76-79 (GAVF), and Lys134. A (R)-lipoate-binding site is contributed by Lys134.

This sequence belongs to the LplA family. As to quaternary structure, monomer.

It is found in the cytoplasm. The enzyme catalyses L-lysyl-[lipoyl-carrier protein] + (R)-lipoate + ATP = N(6)-[(R)-lipoyl]-L-lysyl-[lipoyl-carrier protein] + AMP + diphosphate + H(+). It functions in the pathway protein modification; protein lipoylation via exogenous pathway; protein N(6)-(lipoyl)lysine from lipoate: step 1/2. It participates in protein modification; protein lipoylation via exogenous pathway; protein N(6)-(lipoyl)lysine from lipoate: step 2/2. In terms of biological role, catalyzes both the ATP-dependent activation of exogenously supplied lipoate to lipoyl-AMP and the transfer of the activated lipoyl onto the lipoyl domains of lipoate-dependent enzymes. The protein is Lipoate-protein ligase A of Salmonella paratyphi A (strain ATCC 9150 / SARB42).